The sequence spans 375 residues: MADHSFSDGVPSDSVEAAKNASNTEKLTDQVMQNPRVLAALQERLDNVPHTPSSYIETLPKAVKRRINALKQLQVRCAHIEAKFYEEVHDLERKYAALYQPLFDKRREFITGDVEPTDAESEWHSENEEEEKLAGDMKSKVVVTEKAAATAEEPDPKGIPEFWFTIFRNVDMLSELVQEYDEPILKHLQDIKVKFSDPGQPMSFVLEFHFEPNDYFTNSVLTKTYKMKSEPDKADPFSFEGPEIVDCDGCTIDWKKGKNVTVKTIKKKQKHKGRGTVRTITKQVPNESFFNFFNPLKASGDGESLDEDSEFTLASDFEIGHFFRERIVPRAVLYFTGEAIEDDDNFEEGEEGEEEELEGDEEGEDEDDAEINPKV.

The disordered stretch occupies residues 1 to 31 (MADHSFSDGVPSDSVEAAKNASNTEKLTDQV). Ala-2 is modified (N-acetylalanine). 3 positions are modified to phosphoserine: Ser-5, Ser-7, and Ser-12. The segment covering 20 to 31 (NASNTEKLTDQV) has biased composition (polar residues). Thr-51 bears the Phosphothreonine mark. Ser-53 and Ser-54 each carry phosphoserine. A Phosphothreonine modification is found at Thr-58. The residue at position 105 (Lys-105) is an N6-acetyllysine. The segment at 116 to 137 (PTDAESEWHSENEEEEKLAGDM) is disordered. Basic and acidic residues predominate over residues 121 to 137 (SEWHSENEEEEKLAGDM). Ser-125 is subject to Phosphoserine. Lys-146 bears the N6-acetyllysine mark. The Nuclear localization signal signature appears at 265-271 (IKKKQKH). Ser-304 is subject to Phosphoserine. A disordered region spans residues 339–375 (AIEDDDNFEEGEEGEEEELEGDEEGEDEDDAEINPKV).

It belongs to the nucleosome assembly protein (NAP) family. As to quaternary structure, interacts with core (H2A, CD2APH2B, H3, H4) and linker (H1) histones. In terms of assembly, (Microbial infection) Interacts with Chikungunya virus non-structural protein 3 (via C-terminus). Phosphorylated at the G0/G1 boundary but it is not phosphorylated in S-phase. Phosphorylated protein remains in the cytoplasm in a complex with histones during the G0/G1 transition, whereas dephosphorylation triggers its transport into the nucleus at the G1/S-boundary. Post-translationally, polyglutamylated by TTLL4, a modification that occurs exclusively on glutamate residues and results in polyglutamate chains on the gamma-carboxyl group. Some residues may also be monoglycylated but not polyglycylated due to the absence of functional TTLL10 in human. Ubiquitous. Biallelically expressed in fetal and adult tissues. Highest levels in testis.

The protein resides in the nucleus. The protein localises to the cytoplasm. Its function is as follows. Acts as a histone chaperone in nucleosome assembly. The protein is Nucleosome assembly protein 1-like 4 of Homo sapiens (Human).